The sequence spans 257 residues: UPF0246 protein Shewana3_3143 (257 aa).

The protein belongs to the UPF0246 family.

In Shewanella sp. (strain ANA-3), this protein is UPF0246 protein Shewana3_3143.